A 116-amino-acid polypeptide reads, in one-letter code: S-adenosylmethionine decarboxylase proenzyme (116 aa).

The active-site Schiff-base intermediate with substrate; via pyruvic acid is S63. Position 63 is a pyruvic acid (Ser); by autocatalysis (S63). Catalysis depends on H68, which acts as the Proton acceptor; for processing activity. C83 functions as the Proton donor; for catalytic activity in the catalytic mechanism.

Belongs to the prokaryotic AdoMetDC family. Type 1 subfamily. In terms of assembly, heterotetramer of two alpha and two beta chains arranged as a dimer of alpha/beta heterodimers. Pyruvate serves as cofactor. In terms of processing, is synthesized initially as an inactive proenzyme. Formation of the active enzyme involves a self-maturation process in which the active site pyruvoyl group is generated from an internal serine residue via an autocatalytic post-translational modification. Two non-identical subunits are generated from the proenzyme in this reaction, and the pyruvate is formed at the N-terminus of the alpha chain, which is derived from the carboxyl end of the proenzyme. The post-translation cleavage follows an unusual pathway, termed non-hydrolytic serinolysis, in which the side chain hydroxyl group of the serine supplies its oxygen atom to form the C-terminus of the beta chain, while the remainder of the serine residue undergoes an oxidative deamination to produce ammonia and the pyruvoyl group blocking the N-terminus of the alpha chain.

The enzyme catalyses S-adenosyl-L-methionine + H(+) = S-adenosyl 3-(methylsulfanyl)propylamine + CO2. Its pathway is amine and polyamine biosynthesis; S-adenosylmethioninamine biosynthesis; S-adenosylmethioninamine from S-adenosyl-L-methionine: step 1/1. Its function is as follows. Catalyzes the decarboxylation of S-adenosylmethionine to S-adenosylmethioninamine (dcAdoMet), the propylamine donor required for the synthesis of the polyamines spermine and spermidine from the diamine putrescine. The sequence is that of S-adenosylmethionine decarboxylase proenzyme from Clostridium botulinum (strain ATCC 19397 / Type A).